We begin with the raw amino-acid sequence, 187 residues long: Protein GrpE (187 aa).

The disordered stretch occupies residues 1-26; it reads MNDLKNAENGPDEADTPQGAPSQEPD.

Belongs to the GrpE family. As to quaternary structure, homodimer.

The protein resides in the cytoplasm. In terms of biological role, participates actively in the response to hyperosmotic and heat shock by preventing the aggregation of stress-denatured proteins, in association with DnaK and GrpE. It is the nucleotide exchange factor for DnaK and may function as a thermosensor. Unfolded proteins bind initially to DnaJ; upon interaction with the DnaJ-bound protein, DnaK hydrolyzes its bound ATP, resulting in the formation of a stable complex. GrpE releases ADP from DnaK; ATP binding to DnaK triggers the release of the substrate protein, thus completing the reaction cycle. Several rounds of ATP-dependent interactions between DnaJ, DnaK and GrpE are required for fully efficient folding. In Methylocella silvestris (strain DSM 15510 / CIP 108128 / LMG 27833 / NCIMB 13906 / BL2), this protein is Protein GrpE.